The chain runs to 212 residues: Redox-sensing transcriptional repressor Rex (212 aa).

The H-T-H motif DNA-binding region spans 17-56 (KYHRYLQELMENDIDRISSKELSEKIGFTASQIRQDLNCF). 91–96 (GAGNIG) is an NAD(+) binding site.

Belongs to the transcriptional regulatory Rex family. As to quaternary structure, homodimer.

The protein resides in the cytoplasm. In terms of biological role, modulates transcription in response to changes in cellular NADH/NAD(+) redox state. The polypeptide is Redox-sensing transcriptional repressor Rex (Clostridium perfringens (strain SM101 / Type A)).